A 480-amino-acid chain; its full sequence is MEYEVVIGLEVHAELATKSKIFCSCTTEFGGEPNTHCCPICTGMPGVLPVLNKKAVEYAIMAGLATNCQIARYSKQDRKNYFYPDLPKAYQISQYDLPLCYNGYIDIEVNGQKKRIGIKRIHIEEDAGKLLHDQWEEGSLVDFNRCGVPLIEIVTEPDLRSSEETRIFLEKLKAILQYTEVSDCKMQEGSLRVDVNLSVRPKGSKEFGTRTEMKNLNSFRSVVRAIEYEARRQIEVLESGGVVVQETRRWDDPKGISLSMRTKEEAHDYRYFPEPDLPPIVVDDSWIEEIRKRIPELPDQKKERYIKEYGLPEYDAGVLTSSKAIANYFEECIKYTQNIKAASNWMMGEIMRILNDKGLEPEEINNIKIKPNQLASLINLVDNKTISNTIAKQVFEEMFETGKDPEVIVKEKGLVQITDRNVILEAVKQAIANNPKSVEDYKNGKDKAFGFLVGQVMKITKGKANPQLVNEILREELEKI.

The protein belongs to the GatB/GatE family. GatB subfamily. In terms of assembly, heterotrimer of A, B and C subunits.

It catalyses the reaction L-glutamyl-tRNA(Gln) + L-glutamine + ATP + H2O = L-glutaminyl-tRNA(Gln) + L-glutamate + ADP + phosphate + H(+). The catalysed reaction is L-aspartyl-tRNA(Asn) + L-glutamine + ATP + H2O = L-asparaginyl-tRNA(Asn) + L-glutamate + ADP + phosphate + 2 H(+). In terms of biological role, allows the formation of correctly charged Asn-tRNA(Asn) or Gln-tRNA(Gln) through the transamidation of misacylated Asp-tRNA(Asn) or Glu-tRNA(Gln) in organisms which lack either or both of asparaginyl-tRNA or glutaminyl-tRNA synthetases. The reaction takes place in the presence of glutamine and ATP through an activated phospho-Asp-tRNA(Asn) or phospho-Glu-tRNA(Gln). In Caldicellulosiruptor bescii (strain ATCC BAA-1888 / DSM 6725 / KCTC 15123 / Z-1320) (Anaerocellum thermophilum), this protein is Aspartyl/glutamyl-tRNA(Asn/Gln) amidotransferase subunit B.